The chain runs to 1383 residues: DNA-directed RNA polymerase subunit beta (1383 aa).

This sequence belongs to the RNA polymerase beta chain family. In terms of assembly, the RNAP catalytic core consists of 2 alpha, 1 beta, 1 beta' and 1 omega subunit. When a sigma factor is associated with the core the holoenzyme is formed, which can initiate transcription.

The enzyme catalyses RNA(n) + a ribonucleoside 5'-triphosphate = RNA(n+1) + diphosphate. DNA-dependent RNA polymerase catalyzes the transcription of DNA into RNA using the four ribonucleoside triphosphates as substrates. The protein is DNA-directed RNA polymerase subunit beta of Bartonella quintana (strain Toulouse) (Rochalimaea quintana).